The primary structure comprises 267 residues: MNTTHVPEPHRTEQHTENQRHWRKILDIAPIVSIAFPAAMYFIFDEDSFEGSLFLRFVTVLLPFSYSAVQYAVLLHTNRMPHNKPEGILQSMLYYTLNLLLLAFTIISILSIIAFTLDEWENNDDSLLYSITLPSFFIPLTYLLSVSCRLVPGQIGFTDTGINVLIDILILLFPRTALVSKESKHRLLYAVLFLLPILIRLLKEKYCPSGKSSLPTASWRVAVLALILILVFFAYTFMMCRSMVILNNHFGLLNKLKRVSAPSRSDK.

This sequence belongs to the UPF0328 family.

This is UPF0328 protein ECU06_0070 from Encephalitozoon cuniculi (strain GB-M1) (Microsporidian parasite).